The primary structure comprises 341 residues: UDP-3-O-acylglucosamine N-acyltransferase (341 aa).

Histidine 239 (proton acceptor) is an active-site residue.

Belongs to the transferase hexapeptide repeat family. LpxD subfamily. Homotrimer.

It carries out the reaction a UDP-3-O-[(3R)-3-hydroxyacyl]-alpha-D-glucosamine + a (3R)-hydroxyacyl-[ACP] = a UDP-2-N,3-O-bis[(3R)-3-hydroxyacyl]-alpha-D-glucosamine + holo-[ACP] + H(+). It functions in the pathway bacterial outer membrane biogenesis; LPS lipid A biosynthesis. Catalyzes the N-acylation of UDP-3-O-acylglucosamine using 3-hydroxyacyl-ACP as the acyl donor. Is involved in the biosynthesis of lipid A, a phosphorylated glycolipid that anchors the lipopolysaccharide to the outer membrane of the cell. This chain is UDP-3-O-acylglucosamine N-acyltransferase, found in Shewanella sp. (strain MR-4).